Reading from the N-terminus, the 179-residue chain is Apoptosis regulator Bcl-2 homolog (179 aa).

The BH1 signature appears at E76–A95. The BH2 signature appears at P126–S141.

It belongs to the Bcl-2 family. In terms of assembly, interacts with host BECN1 (via BH3 homology domain); this interaction allows the virus to inhibit BECN1, and thus autophagy. Interacts with host BID. Interacts with host BAX.

Its subcellular location is the host mitochondrion. The protein resides in the host endoplasmic reticulum. Its function is as follows. Suppresses apoptosis in host cell to promote the viral replication. Has the ability to potentially bind to all the members of the proapoptotic Bcl-2 family. Inhibits autophagy by interacting with host Beclin 1 (BECN1). The protein is Apoptosis regulator Bcl-2 homolog of African swine fever virus (isolate Tick/South Africa/Pretoriuskop Pr4/1996) (ASFV).